Here is a 135-residue protein sequence, read N- to C-terminus: Putative nickel-responsive regulator (135 aa).

Histidine 79, histidine 90, histidine 92, and cysteine 98 together coordinate Ni(2+).

The protein belongs to the transcriptional regulatory CopG/NikR family. It depends on Ni(2+) as a cofactor.

Its function is as follows. Transcriptional regulator. The chain is Putative nickel-responsive regulator from Dictyoglomus thermophilum (strain ATCC 35947 / DSM 3960 / H-6-12).